A 1019-amino-acid chain; its full sequence is Sca1 complex protein phr (1019 aa).

Disordered stretches follow at residues 89–118, 131–202, 265–287, and 512–546; these read IVINSSSSSSSSSSHHPHHQKTPSNSSSNF, AFNN…INNN, QQLNQNGGSNNGSTSNSTSNSAN, and STNNNNSGNNSNNNNGNSNGNSSNNNSNNNSTNNL. Over residues 93 to 102 the composition is skewed to low complexity; that stretch reads SSSSSSSSSS. Over residues 141 to 155 the composition is skewed to basic and acidic residues; that stretch reads NRKEKEKDKDKDHQD. The stretch at 158–188 forms a coiled coil; the sequence is NINNINNINNNINNNINNNNNNNNNNNNNNN. Residues 158–202 are compositionally biased toward low complexity; that stretch reads NINNINNINNNINNNINNNNNNNNNNNNNNNMHNPTSSSPSINNN. The PH domain occupies 735–836; it reads EIKKKGYLFK…WIKAIKFNCF (102 aa). A compositionally biased stretch (low complexity) spans 860-872; the sequence is VAGSGSNNGNNNG. Disordered regions lie at residues 860 to 890, 904 to 951, and 977 to 1019; these read VAGSGSNNGNNNGHLKRSDTTQQLNNSGSFI, NLSI…QQQL, and SSYT…SKLK. Polar residues predominate over residues 879–890; that stretch reads TTQQLNNSGSFI. The span at 977–986 shows a compositional bias: low complexity; it reads SSYTDSMSGS. Polar residues predominate over residues 987–1019; it reads PPDSNGQVFPQSPQLKKTLFQRTTSFSKGSKLK.

Component of the Sca1 complex composed of at least gefA, gefH, scaA, phr, and the protein phosphatase 2A subunits pppA and pho2B. Interacts directly with gefH.

Its subcellular location is the cell membrane. Functionally, component of the Sca1 complex, a regulator of cell motility, chemotaxis and signal relay. The Sca1 complex is recruited to the plasma membrane in a chemoattractant- and F-actin-dependent manner and is enriched at the leading edge of chemotaxing cells where it regulates F-actin dynamics and signal relay by controlling the activation of rasC and the downstream target of rapamycin complex 2 (TORC2)-Akt/protein kinase B (PKB) pathway. The sequence is that of Sca1 complex protein phr from Dictyostelium discoideum (Social amoeba).